A 351-amino-acid polypeptide reads, in one-letter code: L-threonine 3-dehydrogenase (351 aa).

Cys39 is a binding site for Zn(2+). Catalysis depends on charge relay system residues Thr41 and His44. His64, Glu65, Cys94, Cys97, Cys100, and Cys108 together coordinate Zn(2+). Residues Ile176, Asp196, Arg201, Leu271–Ile273, and Ile295–Tyr296 contribute to the NAD(+) site.

This sequence belongs to the zinc-containing alcohol dehydrogenase family. As to quaternary structure, homotetramer. Requires Zn(2+) as cofactor.

It localises to the cytoplasm. The enzyme catalyses L-threonine + NAD(+) = (2S)-2-amino-3-oxobutanoate + NADH + H(+). The protein operates within amino-acid degradation; L-threonine degradation via oxydo-reductase pathway; glycine from L-threonine: step 1/2. Functionally, catalyzes the NAD(+)-dependent oxidation of L-threonine to 2-amino-3-ketobutyrate. In Francisella tularensis subsp. novicida (strain U112), this protein is L-threonine 3-dehydrogenase.